The following is a 932-amino-acid chain: Protein translocase subunit SecA (932 aa).

ATP contacts are provided by residues Gln87, 105–109 (GEGKT), and Asp515. The Zn(2+) site is built by Cys916, Cys918, Cys927, and His928.

Belongs to the SecA family. As to quaternary structure, monomer and homodimer. Part of the essential Sec protein translocation apparatus which comprises SecA, SecYEG and auxiliary proteins SecDF-YajC and YidC. Zn(2+) is required as a cofactor.

The protein resides in the cell inner membrane. It localises to the cytoplasm. It catalyses the reaction ATP + H2O + cellular proteinSide 1 = ADP + phosphate + cellular proteinSide 2.. Part of the Sec protein translocase complex. Interacts with the SecYEG preprotein conducting channel. Has a central role in coupling the hydrolysis of ATP to the transfer of proteins into and across the cell membrane, serving both as a receptor for the preprotein-SecB complex and as an ATP-driven molecular motor driving the stepwise translocation of polypeptide chains across the membrane. The polypeptide is Protein translocase subunit SecA (Burkholderia multivorans (strain ATCC 17616 / 249)).